The following is a 180-amino-acid chain: NAD(P)H-quinone oxidoreductase subunit I, chloroplastic (180 aa).

4Fe-4S ferredoxin-type domains are found at residues 55-84 and 95-124; these read GRIHFEFDKCIACEVCVRVCPIDLPLVDWK and LNYSIDFGVCIFCGNCVEYCPTNCLSMTEE. Cysteine 64, cysteine 67, cysteine 70, cysteine 74, cysteine 104, cysteine 107, cysteine 110, and cysteine 114 together coordinate [4Fe-4S] cluster.

It belongs to the complex I 23 kDa subunit family. In terms of assembly, NDH is composed of at least 16 different subunits, 5 of which are encoded in the nucleus. The cofactor is [4Fe-4S] cluster.

It is found in the plastid. Its subcellular location is the chloroplast thylakoid membrane. It catalyses the reaction a plastoquinone + NADH + (n+1) H(+)(in) = a plastoquinol + NAD(+) + n H(+)(out). The enzyme catalyses a plastoquinone + NADPH + (n+1) H(+)(in) = a plastoquinol + NADP(+) + n H(+)(out). Functionally, NDH shuttles electrons from NAD(P)H:plastoquinone, via FMN and iron-sulfur (Fe-S) centers, to quinones in the photosynthetic chain and possibly in a chloroplast respiratory chain. The immediate electron acceptor for the enzyme in this species is believed to be plastoquinone. Couples the redox reaction to proton translocation, and thus conserves the redox energy in a proton gradient. The chain is NAD(P)H-quinone oxidoreductase subunit I, chloroplastic from Sorghum bicolor (Sorghum).